We begin with the raw amino-acid sequence, 493 residues long: Fizzy-related protein homolog (493 aa).

Disordered regions lie at residues 31-51, 64-88, and 105-166; these read LTPANSPVSSPSKHGDRFIPS, INENEKSPSQNRKAKDATSDNGKDG, and EKVQ…SPRK. At Thr-32 the chain carries Phosphothreonine. Positions 32 to 42 are enriched in polar residues; that stretch reads TPANSPVSSPS. Ser-36 is subject to Phosphoserine. Lys-69 carries the N6-acetyllysine modification. 2 stretches are compositionally biased toward basic and acidic residues: residues 76–86 and 106–126; these read KAKDATSDNGK and KVQDPQTEDRRLQPSTPEHKG. Ser-133, Ser-138, Ser-146, and Ser-151 each carry phosphoserine. The segment covering 146–160 has biased composition (polar residues); the sequence is SPYSLSPVSNKSQKL. The residue at position 159 (Lys-159) is an N6-acetyllysine. WD repeat units follow at residues 182 to 222, 227 to 266, 269 to 306, 311 to 350, 353 to 395, 397 to 438, and 441 to 480; these read PELQ…VTRL, VEGDSVTSVGWSERGNLVAVGTHKGFVQIWDAAAGKKLSM, GHTARVGALAWNADQLSSGSRDRMILQRDIRTPPLQSE, GHRQEVCGLKWSTDHQLLASGGNDNKLLVWNHSSLSPVQQ, EHLA…PLQC, DTGS…QVAK, and GHSYRVLYLAMSPDGEAIVTGAGDETLRFWNVFSKTRSTK.

Belongs to the WD repeat CDC20/Fizzy family. The unphosphorylated form interacts with APC/C during mitosis. Interacts with NINL. Interacts (in complex with the anaphase promoting complex APC) with MAD2L2; inhibits FZR1-mediated APC/C activation. Interacts with SIRT2. Interacts with USP37. Interacts (via WD repeats) with MAK. Interacts with RBBP8/CtIP; this interaction leads to RBBP8 proteasomal degradation. Interacts with HECW2. Interacts with SASS6; the interaction is regulated by CENATAC and leads to SASS6 proteasomal degradation. Interacts (via N-terminus) with CCNF. Interacts with CDC6. Interacts with TK1 (via the KEN box). Post-translationally, acetylated. Deacetylated by SIRT2 at Lys-69 and Lys-159; deacetylation enhances the interaction of FZR1 with CDC27, leading to activation of anaphase promoting complex/cyclosome (APC/C). In terms of processing, following DNA damage, it is dephosphorylated by CDC14B in G2 phase, leading to its reassociation with the APC/C, and allowing an efficient G2 DNA damage checkpoint. Phosphorylated by MAK.

The protein operates within protein modification; protein ubiquitination. Functionally, substrate-specific adapter for the anaphase promoting complex/cyclosome (APC/C) E3 ubiquitin-protein ligase complex. Associates with the APC/C in late mitosis, in replacement of CDC20, and activates the APC/C during anaphase and telophase. The APC/C remains active in degrading substrates to ensure that positive regulators of the cell cycle do not accumulate prematurely. At the G1/S transition FZR1 is phosphorylated, leading to its dissociation from the APC/C. Following DNA damage, it is required for the G2 DNA damage checkpoint: its dephosphorylation and reassociation with the APC/C leads to the ubiquitination of PLK1, preventing entry into mitosis. Acts as an adapter for APC/C to target the DNA-end resection factor RBBP8/CtIP for ubiquitination and subsequent proteasomal degradation. Through the regulation of RBBP8/CtIP protein turnover, may play a role in DNA damage response, favoring DNA double-strand repair through error-prone non-homologous end joining (NHEJ) over error-free, RBBP8-mediated homologous recombination (HR). The sequence is that of Fizzy-related protein homolog (Fzr1) from Mus musculus (Mouse).